Consider the following 217-residue polypeptide: Oxygen-evolving enhancer protein 3, chloroplastic (217 aa).

Disordered stretches follow at residues 1 to 25 (MAQA…RRAG) and 73 to 95 (PIKL…SDQA). The N-terminal 63 residues, 1-63 (MAQAMASMTG…ATGIAGGALA (63 aa)), are a transit peptide targeting the chloroplast.

This sequence belongs to the PsbQ family.

Its subcellular location is the plastid. The protein localises to the chloroplast thylakoid membrane. In Oryza sativa subsp. indica (Rice), this protein is Oxygen-evolving enhancer protein 3, chloroplastic.